The chain runs to 300 residues: ADP-polyphosphate phosphotransferase 1 (300 aa).

This sequence belongs to the polyphosphate kinase 2 (PPK2) family. Class I subfamily. In terms of assembly, homotetramer. Requires Mg(2+) as cofactor.

It carries out the reaction [phosphate](n) + ATP = [phosphate](n+1) + ADP. The enzyme catalyses [phosphate](n) + GTP = [phosphate](n+1) + GDP. Its function is as follows. Uses inorganic polyphosphate (polyP) as a donor to convert ADP to ATP. Can also convert GDP to GTP, with lower efficiency. Cannot dephosphorylate ATP in the presence of polyP. The protein is ADP-polyphosphate phosphotransferase 1 of Rhizobium meliloti (strain 1021) (Ensifer meliloti).